Reading from the N-terminus, the 120-residue chain is NAD(P)H-quinone oxidoreductase subunit 3, chloroplastic (120 aa).

The next 3 helical transmembrane spans lie at 9-29, 64-84, and 88-108; these read IFWTFLIIASLIPILAFWISG, MFALVFVVFDVETVFLYPWAM, and VLGVSVFIEAFIFVLILVVGL.

The protein belongs to the complex I subunit 3 family. As to quaternary structure, NDH is composed of at least 16 different subunits, 5 of which are encoded in the nucleus.

The protein resides in the plastid. It localises to the chloroplast thylakoid membrane. The catalysed reaction is a plastoquinone + NADH + (n+1) H(+)(in) = a plastoquinol + NAD(+) + n H(+)(out). It carries out the reaction a plastoquinone + NADPH + (n+1) H(+)(in) = a plastoquinol + NADP(+) + n H(+)(out). Its function is as follows. NDH shuttles electrons from NAD(P)H:plastoquinone, via FMN and iron-sulfur (Fe-S) centers, to quinones in the photosynthetic chain and possibly in a chloroplast respiratory chain. The immediate electron acceptor for the enzyme in this species is believed to be plastoquinone. Couples the redox reaction to proton translocation, and thus conserves the redox energy in a proton gradient. In Agrostis stolonifera (Creeping bentgrass), this protein is NAD(P)H-quinone oxidoreductase subunit 3, chloroplastic.